We begin with the raw amino-acid sequence, 142 residues long: Pleckstrin homology-like domain family A member 2 (142 aa).

The residue at position 3 (serine 3) is a Phosphoserine. Residues 7-99 (VLREGELEKR…WNASITLALI (93 aa)) enclose the PH domain.

Belongs to the PHLDA2 family.

The protein localises to the cytoplasm. The protein resides in the membrane. In terms of biological role, plays a role in regulating placenta growth. May act via its PH domain that competes with other PH domain-containing proteins, thereby preventing their binding to membrane lipids. This chain is Pleckstrin homology-like domain family A member 2 (PHLDA2), found in Bos taurus (Bovine).